The primary structure comprises 388 residues: Tumor protein p53-inducible protein 13 (388 aa).

Residues 1–27 (MVPPPPPPSRLLLVALVGLLSLHEVVA) form the signal peptide. Residues 28–304 (EPAEEAGTRC…ARGPTPRTEE (277 aa)) lie on the Extracellular side of the membrane. A helical transmembrane segment spans residues 305–325 (AAWAAMALTFLLVLLTLATLC). Residues 326–388 (TRLHRNFRRS…DSGPDSESSD (63 aa)) lie on the Cytoplasmic side of the membrane. The segment covering 361 to 372 (PSRRIKRSRRRP) has biased composition (basic residues). The tract at residues 361–388 (PSRRIKRSRRRPLLPPTPDSGPDSESSD) is disordered.

It localises to the cell membrane. The protein localises to the cytoplasm. Functionally, may act as a tumor suppressor. Inhibits tumor cell growth, when overexpressed. This chain is Tumor protein p53-inducible protein 13 (Tp53i13), found in Rattus norvegicus (Rat).